A 67-amino-acid chain; its full sequence is uncharacterized protein (67 aa).

Positions 17 to 47 form a coiled coil; the sequence is AASLQELEKKINTQIENNKAIMLRVKSVSHQ.

This is an uncharacterized protein from Bacillus subtilis (strain 168).